Consider the following 170-residue polypeptide: DLTEAANKSNEALRLAKQESNDYRRQVQALTCEVDALKGTNESLERQMREMEENFAMESSSSQDKIVQLEEDTQNMKDEMAKHLHEYQDLLNVKMALDIEIATYRKLLEGEESRISTPLPNFSSFNLRETMLELKPNIESTFTKKVLIKTIETRDGQVLNESTQNHDDLE.

Positions Asp-1–Asn-10 are enriched in polar residues. The disordered stretch occupies residues Asp-1–Ser-20. A coil 2 region spans residues Asp-1–Glu-111. The 115-residue stretch at Asp-1–Ile-115 folds into the IF rod domain. The tail stretch occupies residues Glu-112–Glu-170.

This sequence belongs to the intermediate filament family. As to quaternary structure, homomer. One of the most prominent phosphoproteins in various cells of mesenchymal origin. Phosphorylation is enhanced during cell division, at which time vimentin filaments are significantly reorganized. In terms of tissue distribution, expressed in low amounts in retina, optic nerve, and brain and in higher amounts in spinal cord.

Vimentins are class-III intermediate filaments found in various non-epithelial cells, especially mesenchymal cells. Vimentin is attached to the nucleus, endoplasmic reticulum, and mitochondria, either laterally or terminally. The chain is Vimentin A1 from Carassius auratus (Goldfish).